The following is a 274-amino-acid chain: Ribosomal RNA small subunit methyltransferase A (274 aa).

His-15, Leu-17, Gly-42, Glu-64, Asp-89, and Asn-109 together coordinate S-adenosyl-L-methionine.

It belongs to the class I-like SAM-binding methyltransferase superfamily. rRNA adenine N(6)-methyltransferase family. RsmA subfamily.

The protein localises to the cytoplasm. The catalysed reaction is adenosine(1518)/adenosine(1519) in 16S rRNA + 4 S-adenosyl-L-methionine = N(6)-dimethyladenosine(1518)/N(6)-dimethyladenosine(1519) in 16S rRNA + 4 S-adenosyl-L-homocysteine + 4 H(+). In terms of biological role, specifically dimethylates two adjacent adenosines (A1518 and A1519) in the loop of a conserved hairpin near the 3'-end of 16S rRNA in the 30S particle. May play a critical role in biogenesis of 30S subunits. This chain is Ribosomal RNA small subunit methyltransferase A, found in Synechococcus sp. (strain CC9605).